Consider the following 339-residue polypeptide: Anthranilate phosphoribosyltransferase (339 aa).

5-phospho-alpha-D-ribose 1-diphosphate is bound by residues G81, 84–85 (GD), T89, 91–94 (NIST), 109–117 (KHGNRSVSS), and S121. Anthranilate is bound at residue G81. Residue S93 coordinates Mg(2+). N112 provides a ligand contact to anthranilate. Residue R165 participates in anthranilate binding. Mg(2+) contacts are provided by D224 and E225.

This sequence belongs to the anthranilate phosphoribosyltransferase family. As to quaternary structure, homodimer. Mg(2+) serves as cofactor.

The enzyme catalyses N-(5-phospho-beta-D-ribosyl)anthranilate + diphosphate = 5-phospho-alpha-D-ribose 1-diphosphate + anthranilate. It participates in amino-acid biosynthesis; L-tryptophan biosynthesis; L-tryptophan from chorismate: step 2/5. In terms of biological role, catalyzes the transfer of the phosphoribosyl group of 5-phosphorylribose-1-pyrophosphate (PRPP) to anthranilate to yield N-(5'-phosphoribosyl)-anthranilate (PRA). This is Anthranilate phosphoribosyltransferase from Thermosynechococcus vestitus (strain NIES-2133 / IAM M-273 / BP-1).